The sequence spans 241 residues: Octanoyltransferase (241 aa).

Residues 43–228 form the BPL/LPL catalytic domain; sequence AETPDEIWLV…CLTANLDGSP (186 aa). Substrate is bound by residues 83–90, 159–161, and 172–174; these read RGGQITYH, ALG, and GVS. Cys190 (acyl-thioester intermediate) is an active-site residue.

Belongs to the LipB family.

The protein resides in the cytoplasm. It carries out the reaction octanoyl-[ACP] + L-lysyl-[protein] = N(6)-octanoyl-L-lysyl-[protein] + holo-[ACP] + H(+). Its pathway is protein modification; protein lipoylation via endogenous pathway; protein N(6)-(lipoyl)lysine from octanoyl-[acyl-carrier-protein]: step 1/2. In terms of biological role, catalyzes the transfer of endogenously produced octanoic acid from octanoyl-acyl-carrier-protein onto the lipoyl domains of lipoate-dependent enzymes. Lipoyl-ACP can also act as a substrate although octanoyl-ACP is likely to be the physiological substrate. The protein is Octanoyltransferase of Paraburkholderia xenovorans (strain LB400).